We begin with the raw amino-acid sequence, 563 residues long: Pyruvate decarboxylase isozyme 3 (563 aa).

N-acetylserine is present on Ser2. Asp28 and His115 together coordinate pyruvate. Residue Lys212 forms a Glycyl lysine isopeptide (Lys-Gly) (interchain with G-Cter in ubiquitin) linkage. At Ser223 the chain carries Phosphoserine. Lys233 participates in a covalent cross-link: Glycyl lysine isopeptide (Lys-Gly) (interchain with G-Cter in ubiquitin). Thr266 bears the Phosphothreonine mark. Residue Lys269 forms a Glycyl lysine isopeptide (Lys-Gly) (interchain with G-Cter in ubiquitin) linkage. Thr353 is subject to Phosphothreonine. Thiamine diphosphate is bound by residues Thr390 and 413 to 415 (GSI). Asp444 contacts Mg(2+). Thiamine diphosphate is bound by residues 445–446 (GS) and 471–476 (NDGYTI). 2 residues coordinate Mg(2+): Asn471 and Gly473. Residue Glu477 coordinates pyruvate. Lys505 participates in a covalent cross-link: Glycyl lysine isopeptide (Lys-Gly) (interchain with G-Cter in ubiquitin). Thr522 is modified (phosphothreonine).

This sequence belongs to the TPP enzyme family. In terms of assembly, homotetramer. Mg(2+) is required as a cofactor. The cofactor is thiamine diphosphate.

The protein localises to the cytoplasm. It catalyses the reaction pyruvate + H(+) = acetaldehyde + CO2. The catalysed reaction is 3-methyl-2-oxobutanoate + H(+) = 2-methylpropanal + CO2. It carries out the reaction (S)-3-methyl-2-oxopentanoate + H(+) = 2-methylbutanal + CO2. The enzyme catalyses indole-3-pyruvate + H(+) = indole-3-acetaldehyde + CO2. It catalyses the reaction 3-phenylpyruvate + H(+) = 2-phenylacetaldehyde + CO2. The catalysed reaction is 2-oxobutanoate + H(+) = propanal + CO2. It carries out the reaction 2-oxopentanoate + H(+) = butanal + CO2. The enzyme catalyses 2 acetaldehyde = acetoin. It catalyses the reaction acetaldehyde + pyruvate + H(+) = acetoin + CO2. It functions in the pathway fermentation; ethanol fermentation. The protein operates within amino-acid degradation; Ehrlich pathway. Functionally, minor of three pyruvate decarboxylases (PDC1, PDC5, PDC6) implicated in the nonoxidative conversion of pyruvate to acetaldehyde and carbon dioxide during alcoholic fermentation. Most of the produced acetaldehyde is subsequently reduced to ethanol, but some is required for cytosolic acetyl-CoA production for biosynthetic pathways. The enzyme is also one of five 2-oxo acid decarboxylases (PDC1, PDC5, PDC6, ARO10, and THI3) able to decarboxylate more complex 2-oxo acids (alpha-keto-acids) than pyruvate, which seem mainly involved in amino acid catabolism. Here the enzyme catalyzes the decarboxylation of amino acids, which, in a first step, have been transaminated to the corresponding 2-oxo acids. In a third step, the resulting aldehydes are reduced to alcohols, collectively referred to as fusel oils or alcohols. Its preferred substrates are the transaminated amino acids derived from threonine (2-oxobutanoate), norvaline (2-oxopentanoate), valine (3-methyl-2-oxobutanoate, also alpha-keto-isovalerate), isoleucine ((3S)-3-methyl-2-oxopentanoate, also alpha-keto-beta-methylvalerate), phenylalanine (phenylpyruvate), and tryptophan (3-(indol-3-yl)pyruvate), whereas transaminated leucine is no substrate. In a side-reaction the carbanionic intermediate (or active aldehyde) generated by decarboxylation or by activation of an aldehyde can react with an aldehyde via condensation (or carboligation) yielding a 2-hydroxy ketone, collectively called acyloins. The expression level of this protein in the presence of fermentable carbon sources is so low that it cannot compensate for the other two pyruvate decarboxylases to sustain fermentation. This Saccharomyces cerevisiae (strain ATCC 204508 / S288c) (Baker's yeast) protein is Pyruvate decarboxylase isozyme 3 (PDC6).